The chain runs to 335 residues: Flagellar P-ring protein (335 aa).

Residues 1–24 form the signal peptide; it reads MNKITNFLILSAVLFFSLIESANA.

This sequence belongs to the FlgI family. In terms of assembly, the basal body constitutes a major portion of the flagellar organelle and consists of four rings (L,P,S, and M) mounted on a central rod.

The protein localises to the periplasm. The protein resides in the bacterial flagellum basal body. Functionally, assembles around the rod to form the L-ring and probably protects the motor/basal body from shearing forces during rotation. The polypeptide is Flagellar P-ring protein (Bdellovibrio bacteriovorus (strain ATCC 15356 / DSM 50701 / NCIMB 9529 / HD100)).